An 83-amino-acid chain; its full sequence is Sulfur carrier protein TusA (83 aa).

The active-site Cysteine persulfide intermediate is Cys-20.

This sequence belongs to the sulfur carrier protein TusA family.

Its subcellular location is the cytoplasm. Functionally, sulfur carrier protein which probably makes part of a sulfur-relay system. The protein is Sulfur carrier protein TusA of Pseudoalteromonas atlantica (strain T6c / ATCC BAA-1087).